A 75-amino-acid polypeptide reads, in one-letter code: Large ribosomal subunit protein bL31 (75 aa).

Belongs to the bacterial ribosomal protein bL31 family. Type A subfamily. As to quaternary structure, part of the 50S ribosomal subunit.

Binds the 23S rRNA. This Nitrobacter winogradskyi (strain ATCC 25391 / DSM 10237 / CIP 104748 / NCIMB 11846 / Nb-255) protein is Large ribosomal subunit protein bL31.